A 95-amino-acid polypeptide reads, in one-letter code: Large ribosomal subunit protein uL23 (95 aa).

It belongs to the universal ribosomal protein uL23 family. Part of the 50S ribosomal subunit. Contacts protein L29, and trigger factor when it is bound to the ribosome.

Functionally, one of the early assembly proteins it binds 23S rRNA. One of the proteins that surrounds the polypeptide exit tunnel on the outside of the ribosome. Forms the main docking site for trigger factor binding to the ribosome. This Desulforapulum autotrophicum (strain ATCC 43914 / DSM 3382 / VKM B-1955 / HRM2) (Desulfobacterium autotrophicum) protein is Large ribosomal subunit protein uL23.